The chain runs to 318 residues: Ornithine carbamoyltransferase (318 aa).

Carbamoyl phosphate contacts are provided by residues 63–66, Gln-90, Arg-114, and 141–144; these read STRT and HPCQ. L-ornithine contacts are provided by residues Asn-172, Asp-235, and 239–240; that span reads SM. Residues 275–276 and Arg-303 each bind carbamoyl phosphate; that span reads CL.

This sequence belongs to the aspartate/ornithine carbamoyltransferase superfamily. OTCase family.

It is found in the cytoplasm. The enzyme catalyses carbamoyl phosphate + L-ornithine = L-citrulline + phosphate + H(+). It functions in the pathway amino-acid biosynthesis; L-arginine biosynthesis; L-arginine from L-ornithine and carbamoyl phosphate: step 1/3. Functionally, reversibly catalyzes the transfer of the carbamoyl group from carbamoyl phosphate (CP) to the N(epsilon) atom of ornithine (ORN) to produce L-citrulline. The protein is Ornithine carbamoyltransferase of Parasynechococcus marenigrum (strain WH8102).